Here is a 1431-residue protein sequence, read N- to C-terminus: DNA polymerase II large subunit (1431 aa).

The interval 1388–1431 is disordered; the sequence is LLENFANGYNKGKKEEMPKKQRKKEQEKSKKRKVISLDDFFSRK. Residues 1399–1415 show a composition bias toward basic and acidic residues; it reads GKKEEMPKKQRKKEQEK.

The protein belongs to the archaeal DNA polymerase II family. Heterodimer of a large subunit and a small subunit. In terms of processing, this protein undergoes a protein self splicing that involves a post-translational excision of the intervening region (intein) followed by peptide ligation.

The catalysed reaction is DNA(n) + a 2'-deoxyribonucleoside 5'-triphosphate = DNA(n+1) + diphosphate. It catalyses the reaction Exonucleolytic cleavage in the 3'- to 5'-direction to yield nucleoside 5'-phosphates.. Functionally, possesses two activities: a DNA synthesis (polymerase) and an exonucleolytic activity that degrades single-stranded DNA in the 3'- to 5'-direction. Has a template-primer preference which is characteristic of a replicative DNA polymerase. This Pyrococcus horikoshii (strain ATCC 700860 / DSM 12428 / JCM 9974 / NBRC 100139 / OT-3) protein is DNA polymerase II large subunit (polC).